Here is a 149-residue protein sequence, read N- to C-terminus: Transcriptional regulator MraZ (149 aa).

SpoVT-AbrB domains are found at residues histidine 6–aspartate 52 and serine 81–glutamate 124.

Belongs to the MraZ family. In terms of assembly, forms oligomers.

The protein resides in the cytoplasm. The protein localises to the nucleoid. The polypeptide is Transcriptional regulator MraZ (Maridesulfovibrio salexigens (strain ATCC 14822 / DSM 2638 / NCIMB 8403 / VKM B-1763) (Desulfovibrio salexigens)).